A 296-amino-acid chain; its full sequence is Nucleotide-binding protein Spy49_0545 (296 aa).

13 to 20 (GMSGAGKT) contacts ATP. 63-66 (DMRS) provides a ligand contact to GTP.

This sequence belongs to the RapZ-like family.

Functionally, displays ATPase and GTPase activities. The polypeptide is Nucleotide-binding protein Spy49_0545 (Streptococcus pyogenes serotype M49 (strain NZ131)).